The chain runs to 192 residues: Phosphoheptose isomerase (192 aa).

The region spanning 37 to 192 is the SIS domain; it reads LADSFKAGGK…IQLIEKEMVK (156 aa). Substrate is bound at residue 52 to 54; the sequence is NGG. Zn(2+) contacts are provided by His61 and Glu65. Substrate-binding positions include Glu65, 93–94, 119–121, Ser124, and Gln172; these read ND and STS. Residues Gln172 and His180 each coordinate Zn(2+).

This sequence belongs to the SIS family. GmhA subfamily. In terms of assembly, homotetramer. Zn(2+) is required as a cofactor.

The protein localises to the cytoplasm. It catalyses the reaction 2 D-sedoheptulose 7-phosphate = D-glycero-alpha-D-manno-heptose 7-phosphate + D-glycero-beta-D-manno-heptose 7-phosphate. Its pathway is carbohydrate biosynthesis; D-glycero-D-manno-heptose 7-phosphate biosynthesis; D-glycero-alpha-D-manno-heptose 7-phosphate and D-glycero-beta-D-manno-heptose 7-phosphate from sedoheptulose 7-phosphate: step 1/1. Catalyzes the isomerization of sedoheptulose 7-phosphate in D-glycero-D-manno-heptose 7-phosphate. In Shigella dysenteriae serotype 1 (strain Sd197), this protein is Phosphoheptose isomerase.